We begin with the raw amino-acid sequence, 85 residues long: WAP four-disulfide core domain protein 12 (85 aa).

Positions 1 to 21 are cleaved as a signal peptide; that stretch reads MWPNSILVLMTLLISSTLVTG. In terms of domain architecture, WAP spans 25 to 72; sequence KGEEKRVCPPDYVRCIRQDDPQCYSDNDCGDQEICCFWQCGFKCVLPV. Disulfide bonds link cysteine 32–cysteine 60, cysteine 39–cysteine 64, cysteine 47–cysteine 59, and cysteine 53–cysteine 68.

Constitutively expressed in tongue.

The protein resides in the secreted. Functionally, antibacterial protein which inhibits the growth of E.coli and S.aureus. Putative acid-stable proteinase inhibitor. This is WAP four-disulfide core domain protein 12 from Mus musculus (Mouse).